Reading from the N-terminus, the 367-residue chain is Leucine-rich repeat-containing protein 28 (367 aa).

LRR repeat units follow at residues 16–36 (KHKN…ELLK), 42–63 (YLER…LAQK), 66–87 (NLVE…IGSL), 89–110 (KLQC…IGRL), 112–133 (ALRH…VGDL), 135–156 (ELQT…LHMC), 158–180 (SLQY…CQLP), 181–202 (SLNE…LGRS), and 204–226 (ELQY…LYNK).

This Homo sapiens (Human) protein is Leucine-rich repeat-containing protein 28 (LRRC28).